A 167-amino-acid chain; its full sequence is MGRRFRGESHHKVDSKGRVSIPASFRRVLEASDPNWQPGDAPELVIVYGDHRRQYLECYTMEAIEEVDAKIAALPRGSKGRKILERIFNGQSLPTTVDETGRLVLPAKLRQKIDLDKEAFFIASGDTFQIWKPETYEEVEMAEAEKLMDELPDDFDPLEFLDGAGGA.

2 SpoVT-AbrB domains span residues 8–51 (ESHH…YGDH) and 92–135 (SLPT…KPET).

It belongs to the MraZ family. Forms oligomers.

It localises to the cytoplasm. It is found in the nucleoid. This is Transcriptional regulator MraZ from Ruegeria sp. (strain TM1040) (Silicibacter sp.).